The chain runs to 580 residues: Proline--tRNA ligase (580 aa).

Belongs to the class-II aminoacyl-tRNA synthetase family. ProS type 1 subfamily. As to quaternary structure, homodimer.

It is found in the cytoplasm. The enzyme catalyses tRNA(Pro) + L-proline + ATP = L-prolyl-tRNA(Pro) + AMP + diphosphate. Catalyzes the attachment of proline to tRNA(Pro) in a two-step reaction: proline is first activated by ATP to form Pro-AMP and then transferred to the acceptor end of tRNA(Pro). As ProRS can inadvertently accommodate and process non-cognate amino acids such as alanine and cysteine, to avoid such errors it has two additional distinct editing activities against alanine. One activity is designated as 'pretransfer' editing and involves the tRNA(Pro)-independent hydrolysis of activated Ala-AMP. The other activity is designated 'posttransfer' editing and involves deacylation of mischarged Ala-tRNA(Pro). The misacylated Cys-tRNA(Pro) is not edited by ProRS. In Maridesulfovibrio salexigens (strain ATCC 14822 / DSM 2638 / NCIMB 8403 / VKM B-1763) (Desulfovibrio salexigens), this protein is Proline--tRNA ligase.